The following is a 1134-amino-acid chain: Early transcription factor large subunit homolog (1134 aa).

Residues 52 to 352 (KGGRAFFPCD…PNGQPLQRQQ (301 aa)) form the Helicase ATP-binding domain. 99 to 106 (WQTGTGKS) serves as a coordination point for ATP. The DEAH box motif lies at 281–284 (DEIH). The region spanning 524 to 725 (MMKDILSIIR…EGDKALRKHA (202 aa)) is the Helicase C-terminal domain.

Belongs to the DEAD box helicase family. DEAH subfamily.

It is found in the virion. It carries out the reaction ATP + H2O = ADP + phosphate + H(+). Putative initation factor. The sequence is that of Early transcription factor large subunit homolog from African swine fever virus (isolate Pig/Kenya/KEN-50/1950) (ASFV).